We begin with the raw amino-acid sequence, 445 residues long: Cytoplasmic tRNA 2-thiolation protein 2 (445 aa).

Positions 1-11 (MCSIGEDDFGD) are enriched in acidic residues. Positions 1 to 26 (MCSIGEDDFGDEGGVHAMKEESPLPE) are disordered. Basic and acidic residues predominate over residues 13-22 (GGVHAMKEES).

Belongs to the CTU2/NCS2 family.

The protein resides in the cytoplasm. It functions in the pathway tRNA modification; 5-methoxycarbonylmethyl-2-thiouridine-tRNA biosynthesis. Plays a central role in 2-thiolation of mcm(5)S(2)U at tRNA wobble positions of tRNA(Lys), tRNA(Glu) and tRNA(Gln). May act by forming a heterodimer with NCS6/CTU1 that ligates sulfur from thiocarboxylated URM1 onto the uridine of tRNAs at wobble position. The polypeptide is Cytoplasmic tRNA 2-thiolation protein 2 (Aedes aegypti (Yellowfever mosquito)).